A 225-amino-acid polypeptide reads, in one-letter code: Reticulon-like protein B9 (225 aa).

One can recognise a Reticulon domain in the interval 39 to 224 (VADILLWREP…PRGTVKNKKF (186 aa)). 3 consecutive transmembrane segments (helical) span residues 50–70 (IAAT…VVEY), 72–92 (FITL…IWST), and 152–172 (YIVS…IGFV).

The protein localises to the endoplasmic reticulum membrane. The chain is Reticulon-like protein B9 (RTNLB9) from Arabidopsis thaliana (Mouse-ear cress).